The following is a 301-amino-acid chain: Pyridoxal 5'-phosphate synthase subunit PdxS (301 aa).

D31 lines the D-ribose 5-phosphate pocket. K88 functions as the Schiff-base intermediate with D-ribose 5-phosphate in the catalytic mechanism. Position 160 (G160) interacts with D-ribose 5-phosphate. K172 lines the D-glyceraldehyde 3-phosphate pocket. Residues G221 and 242–243 (GS) contribute to the D-ribose 5-phosphate site.

Belongs to the PdxS/SNZ family. In terms of assembly, in the presence of PdxT, forms a dodecamer of heterodimers.

The catalysed reaction is aldehydo-D-ribose 5-phosphate + D-glyceraldehyde 3-phosphate + L-glutamine = pyridoxal 5'-phosphate + L-glutamate + phosphate + 3 H2O + H(+). Its pathway is cofactor biosynthesis; pyridoxal 5'-phosphate biosynthesis. In terms of biological role, catalyzes the formation of pyridoxal 5'-phosphate from ribose 5-phosphate (RBP), glyceraldehyde 3-phosphate (G3P) and ammonia. The ammonia is provided by the PdxT subunit. Can also use ribulose 5-phosphate and dihydroxyacetone phosphate as substrates, resulting from enzyme-catalyzed isomerization of RBP and G3P, respectively. This chain is Pyridoxal 5'-phosphate synthase subunit PdxS, found in Methanosarcina mazei (strain ATCC BAA-159 / DSM 3647 / Goe1 / Go1 / JCM 11833 / OCM 88) (Methanosarcina frisia).